The following is a 260-amino-acid chain: Indole-3-glycerol phosphate synthase (260 aa).

The protein belongs to the TrpC family.

The enzyme catalyses 1-(2-carboxyphenylamino)-1-deoxy-D-ribulose 5-phosphate + H(+) = (1S,2R)-1-C-(indol-3-yl)glycerol 3-phosphate + CO2 + H2O. Its pathway is amino-acid biosynthesis; L-tryptophan biosynthesis; L-tryptophan from chorismate: step 4/5. This chain is Indole-3-glycerol phosphate synthase, found in Nocardioides sp. (strain ATCC BAA-499 / JS614).